The following is a 61-amino-acid chain: Small ribosomal subunit protein uS14 (61 aa).

Zn(2+) is bound by residues Cys24, Cys27, Cys40, and Cys43.

It belongs to the universal ribosomal protein uS14 family. Zinc-binding uS14 subfamily. As to quaternary structure, part of the 30S ribosomal subunit. Contacts proteins S3 and S10. Zn(2+) serves as cofactor.

Its function is as follows. Binds 16S rRNA, required for the assembly of 30S particles and may also be responsible for determining the conformation of the 16S rRNA at the A site. This chain is Small ribosomal subunit protein uS14, found in Lachnospira eligens (strain ATCC 27750 / DSM 3376 / VPI C15-48 / C15-B4) (Eubacterium eligens).